Here is a 601-residue protein sequence, read N- to C-terminus: NADH-ubiquinone oxidoreductase chain 5 (601 aa).

A run of 17 helical transmembrane segments spans residues 5-25 (ITSL…TLSF), 37-54 (YMRN…IYID), 83-105 (YCLT…SLWY), 112-129 (TLFF…LFFL), 134-156 (LLQL…NWWH), 169-189 (IIYN…SALF), 209-231 (WLPL…LHPW), 240-260 (TPVS…FLLI), 271-291 (MIIS…ALCA), 300-320 (IIAF…GINQ), 323-343 (LAFL…LCSA), 363-383 (LILP…MGMP), 400-420 (MSYV…LTSI), 451-471 (PLIR…TFFL), 478-498 (FSIP…VSSL), 508-528 (FSHM…AIFH), and 581-601 (NYIT…ALYF).

Belongs to the complex I subunit 5 family.

Its subcellular location is the mitochondrion inner membrane. It catalyses the reaction a ubiquinone + NADH + 5 H(+)(in) = a ubiquinol + NAD(+) + 4 H(+)(out). Its function is as follows. Core subunit of the mitochondrial membrane respiratory chain NADH dehydrogenase (Complex I) that is believed to belong to the minimal assembly required for catalysis. Complex I functions in the transfer of electrons from NADH to the respiratory chain. The immediate electron acceptor for the enzyme is believed to be ubiquinone. This is NADH-ubiquinone oxidoreductase chain 5 (MT-ND5) from Myxine glutinosa (Atlantic hagfish).